Reading from the N-terminus, the 155-residue chain is Ribosomal RNA large subunit methyltransferase H (155 aa).

S-adenosyl-L-methionine-binding positions include L72, G103, and 122–127 (LSALTL).

Belongs to the RNA methyltransferase RlmH family. In terms of assembly, homodimer.

It localises to the cytoplasm. It catalyses the reaction pseudouridine(1915) in 23S rRNA + S-adenosyl-L-methionine = N(3)-methylpseudouridine(1915) in 23S rRNA + S-adenosyl-L-homocysteine + H(+). Specifically methylates the pseudouridine at position 1915 (m3Psi1915) in 23S rRNA. The protein is Ribosomal RNA large subunit methyltransferase H of Shigella boydii serotype 18 (strain CDC 3083-94 / BS512).